A 98-amino-acid chain; its full sequence is NADH-quinone oxidoreductase subunit K (98 aa).

Transmembrane regions (helical) follow at residues 1–21 (MGHLLGLGAVLFCISLAGIFL), 27–47 (IVLLMSIELMLLSVNVNFIAF), and 59–79 (FVFFILTVAAAEAAIGLAILV).

It belongs to the complex I subunit 4L family. In terms of assembly, NDH-1 is composed of 14 different subunits. Subunits NuoA, H, J, K, L, M, N constitute the membrane sector of the complex.

Its subcellular location is the cell inner membrane. It carries out the reaction a quinone + NADH + 5 H(+)(in) = a quinol + NAD(+) + 4 H(+)(out). Its function is as follows. NDH-1 shuttles electrons from NADH, via FMN and iron-sulfur (Fe-S) centers, to quinones in the respiratory chain. The immediate electron acceptor for the enzyme in this species is believed to be ubiquinone. Couples the redox reaction to proton translocation (for every two electrons transferred, four hydrogen ions are translocated across the cytoplasmic membrane), and thus conserves the redox energy in a proton gradient. In Xanthomonas oryzae pv. oryzae (strain PXO99A), this protein is NADH-quinone oxidoreductase subunit K.